The following is a 400-amino-acid chain: Argininosuccinate synthase (400 aa).

8–16 (AYSGGLDTS) provides a ligand contact to ATP. L-citrulline is bound at residue Tyr-87. Residue Gly-117 coordinates ATP. L-aspartate contacts are provided by Thr-119, Asn-123, and Asp-124. Asn-123 provides a ligand contact to L-citrulline. The L-citrulline site is built by Arg-127, Ser-175, Glu-260, and Tyr-272.

The protein belongs to the argininosuccinate synthase family. Type 1 subfamily. In terms of assembly, homotetramer.

The protein resides in the cytoplasm. It catalyses the reaction L-citrulline + L-aspartate + ATP = 2-(N(omega)-L-arginino)succinate + AMP + diphosphate + H(+). Its pathway is amino-acid biosynthesis; L-arginine biosynthesis; L-arginine from L-ornithine and carbamoyl phosphate: step 2/3. The sequence is that of Argininosuccinate synthase from Mycobacterium sp. (strain JLS).